The following is a 495-amino-acid chain: D-hydantoinase/dihydropyrimidinase (495 aa).

Residues His-59, His-61, and Lys-150 each coordinate Zn(2+). Position 150 is an N6-carboxylysine (Lys-150). Tyr-155 is a binding site for substrate. The Zn(2+) site is built by His-183 and His-239. Ser-289 contacts substrate. Zn(2+) is bound at residue Asp-316. Position 337 (Asn-337) interacts with substrate.

It belongs to the metallo-dependent hydrolases superfamily. Hydantoinase/dihydropyrimidinase family. In terms of assembly, homotetramer. Zn(2+) serves as cofactor. Post-translationally, carboxylation allows a single lysine to coordinate two zinc ions.

The enzyme catalyses 5,6-dihydrouracil + H2O = 3-(carbamoylamino)propanoate + H(+). Its function is as follows. Catalyzes the hydrolysis of dihydropyrimidines and of the structurally related DL-5-mono-substituted hydantoins, to produce N-carbamoyl-D-amino acids. The sequence is that of D-hydantoinase/dihydropyrimidinase from Pseudomonas putida (Arthrobacter siderocapsulatus).